A 308-amino-acid chain; its full sequence is UPF0282 protein PYRAB09800 (308 aa).

The protein belongs to the UPF0282 family.

The chain is UPF0282 protein PYRAB09800 from Pyrococcus abyssi (strain GE5 / Orsay).